The primary structure comprises 166 residues: Bacterial non-heme ferritin (166 aa).

The Ferritin-like diiron domain maps to 2-145 (LSKELLAALN…THIDYLTRIG (144 aa)). E17, E50, H53, E94, and Q127 together coordinate Fe cation.

This sequence belongs to the ferritin family. Prokaryotic subfamily.

The protein resides in the cytoplasm. It carries out the reaction 4 Fe(2+) + O2 + 6 H2O = 4 iron(III) oxide-hydroxide + 12 H(+). Its function is as follows. Iron-storage protein. The chain is Bacterial non-heme ferritin (ftnA) from Staphylococcus epidermidis (strain ATCC 12228 / FDA PCI 1200).